The following is a 96-amino-acid chain: MLMMFYWSLPCFLFLMGVFVFVSNRKHLLSMLLSLEYIVLNLFFLLYIYLNLMEYLSFLGMMFLTFSVCEGALGLSIMVSMIRTHGNDYFQSFNVL.

3 helical membrane-spanning segments follow: residues 2–22 (LMMF…FVFV), 28–48 (LLSM…LLYI), and 58–78 (FLGM…LSIM).

This sequence belongs to the complex I subunit 4L family.

It is found in the mitochondrion membrane. The enzyme catalyses a ubiquinone + NADH + 5 H(+)(in) = a ubiquinol + NAD(+) + 4 H(+)(out). Core subunit of the mitochondrial membrane respiratory chain NADH dehydrogenase (Complex I) that is believed to belong to the minimal assembly required for catalysis. Complex I functions in the transfer of electrons from NADH to the respiratory chain. The immediate electron acceptor for the enzyme is believed to be ubiquinone. The protein is NADH-ubiquinone oxidoreductase chain 4L (ND4L) of Ceratitis capitata (Mediterranean fruit fly).